A 302-amino-acid chain; its full sequence is Glycine N-acyltransferase-like protein 1 (302 aa).

The protein belongs to the glycine N-acyltransferase family. Expressed in liver and kidney and, at lower levels, in pancreas, testis, ovary and stomach.

The enzyme catalyses an acyl-CoA + L-glutamine = an N(2)-acyl-L-glutamine + CoA + H(+). In terms of biological role, acyltransferase which transfers an acyl group to the N-terminus of glutamine. Can use phenylacetyl-CoA as an acyl donor. In Homo sapiens (Human), this protein is Glycine N-acyltransferase-like protein 1.